The sequence spans 1915 residues: Protein TIC 214 (1915 aa).

A run of 6 helical transmembrane segments spans residues 18–38 (IINS…FSIG), 64–84 (FITG…HLAL), 90–110 (ITVL…HKYF), 126–146 (LNIQ…HFIL), 174–194 (VGWL…LIWI), and 230–250 (IFSI…PSTL). Disordered regions lie at residues 260–319 (KMKQ…EIRV) and 1566–1631 (NKNI…GSVL). Residues 267–277 (SEEETDVEIET) are compositionally biased toward acidic residues. The segment covering 279–288 (SETKETKEEQ) has biased composition (basic and acidic residues). Residues 304-315 (EKEDPDKIDETE) show a composition bias toward acidic residues. Residues 1587–1601 (KSLELENRNQEEKES) show a composition bias toward basic and acidic residues. The span at 1602 to 1631 (SSQGDLGSNAQNQGNLGPNAQNQGNLGSVL) shows a compositional bias: polar residues.

Belongs to the TIC214 family. Part of the Tic complex.

The protein localises to the plastid. It localises to the chloroplast inner membrane. Its function is as follows. Involved in protein precursor import into chloroplasts. May be part of an intermediate translocation complex acting as a protein-conducting channel at the inner envelope. In Platanus occidentalis (Sycamore), this protein is Protein TIC 214.